Reading from the N-terminus, the 294-residue chain is Single-stranded nucleic acid-binding protein (294 aa).

The disordered stretch occupies residues 1–30; the sequence is MSAEIEEATNAVNNLSINDSEQQPRAPTHK. An N-acetylserine modification is found at serine 2. A phosphoserine mark is found at serine 2 and serine 16. Over residues 10 to 25 the composition is skewed to polar residues; that stretch reads NAVNNLSINDSEQQPR. Positions 37 to 119 constitute an RRM 1 domain; sequence DTIFIGNVAH…REIHIKRART (83 aa). Threonine 49 carries the post-translational modification Phosphothreonine. Serine 66 carries the post-translational modification Phosphoserine. Phosphothreonine occurs at positions 91 and 119. At arginine 125 the chain carries Omega-N-methylarginine. An RNA-binding RGG-box region spans residues 131-151; sequence RGGFRGRGGFRGGFRGGYRGG. Dimethylated arginine is present on residues arginine 135, arginine 137, and arginine 141. Position 145 is a dimethylated arginine; alternate (arginine 145). Residue arginine 145 is modified to Omega-N-methylarginine; alternate. At arginine 149 the chain carries Omega-N-methylarginine. Over residues 151–169 the composition is skewed to gly residues; that stretch reads GFRGRGNFRGRGGARGGFN. The interval 151-171 is disordered; that stretch reads GFRGRGNFRGRGGARGGFNGQ. Dimethylated arginine occurs at positions 153, 155, and 159. 2 positions are modified to dimethylated arginine; alternate: arginine 161 and arginine 165. 2 positions are modified to omega-N-methylarginine; alternate: arginine 161 and arginine 165. The RRM 2 domain maps to 186–274; it reads DTLYINNVPF…RELTVDVAVI (89 aa). Threonine 242 is modified (phosphothreonine). Phosphoserine is present on serine 244. A disordered region spans residues 275–294; it reads RPENDEEEIEQETGSEEKQE. Residues 278 to 288 show a composition bias toward acidic residues; the sequence is NDEEEIEQETG. Position 287 is a phosphothreonine (threonine 287). A Phosphoserine modification is found at serine 289.

It belongs to the RRM GAR family. As to quaternary structure, associated with snR10 and snR11 small nuclear RNAs.

The protein resides in the cytoplasm. The protein localises to the nucleus. Its subcellular location is the nucleolus. It localises to the P-body. It is found in the stress granule. In terms of biological role, functions in the transition of mRNAs from translation to an mRNP complex destined for decapping. High-copy-number suppressor of decapping defects. Overexpression suppresses decapping defects in both DCP1-2 and DCP2-7 mutations. Acts to promote translational repression of mRNA in conjunction with DHH1 and subsequent mRNA localization to P bodies. Promotes translational repression of mRNA during glucose deprivation. This is Single-stranded nucleic acid-binding protein (SBP1) from Saccharomyces cerevisiae (strain ATCC 204508 / S288c) (Baker's yeast).